Consider the following 119-residue polypeptide: Large ribosomal subunit protein bL20 (119 aa).

The protein belongs to the bacterial ribosomal protein bL20 family.

Its function is as follows. Binds directly to 23S ribosomal RNA and is necessary for the in vitro assembly process of the 50S ribosomal subunit. It is not involved in the protein synthesizing functions of that subunit. The sequence is that of Large ribosomal subunit protein bL20 from Clostridium kluyveri (strain NBRC 12016).